We begin with the raw amino-acid sequence, 101 residues long: Nucleoid-associated protein Acid345_1974 (101 aa).

This sequence belongs to the YbaB/EbfC family. In terms of assembly, homodimer.

Its subcellular location is the cytoplasm. The protein resides in the nucleoid. Binds to DNA and alters its conformation. May be involved in regulation of gene expression, nucleoid organization and DNA protection. This chain is Nucleoid-associated protein Acid345_1974, found in Koribacter versatilis (strain Ellin345).